Consider the following 273-residue polypeptide: Large ribosomal subunit protein uL2cy (273 aa).

Disordered regions lie at residues 1-27 (MAIH…SNPR) and 224-273 (NPVD…RRRK).

This sequence belongs to the universal ribosomal protein uL2 family. Part of the 50S ribosomal subunit.

It localises to the plastid. The protein resides in the chloroplast. This Liriodendron tulipifera (Tuliptree) protein is Large ribosomal subunit protein uL2cy (rpl2-B).